Consider the following 396-residue polypeptide: Elongation factor Tu 2 (396 aa).

One can recognise a tr-type G domain in the interval 10 to 206; it reads KPHCNIGTIG…TVDAYIPQPD (197 aa). The tract at residues 19 to 26 is G1; it reads GHVDHGKT. 19–26 is a GTP binding site; that stretch reads GHVDHGKT. Threonine 26 lines the Mg(2+) pocket. The G2 stretch occupies residues 60–64; the sequence is GITIN. The interval 81–84 is G3; it reads DCPG. GTP-binding positions include 81–85 and 136–139; these read DCPGH and NKVD. Residues 136 to 139 form a G4 region; it reads NKVD. Residues 174–176 form a G5 region; the sequence is SAK.

The protein belongs to the TRAFAC class translation factor GTPase superfamily. Classic translation factor GTPase family. EF-Tu/EF-1A subfamily. In terms of assembly, monomer.

The protein resides in the cytoplasm. The catalysed reaction is GTP + H2O = GDP + phosphate + H(+). Functionally, GTP hydrolase that promotes the GTP-dependent binding of aminoacyl-tRNA to the A-site of ribosomes during protein biosynthesis. This Caulobacter sp. (strain K31) protein is Elongation factor Tu 2.